The chain runs to 254 residues: 3-deoxy-manno-octulosonate cytidylyltransferase (254 aa).

This sequence belongs to the KdsB family.

The protein resides in the cytoplasm. It carries out the reaction 3-deoxy-alpha-D-manno-oct-2-ulosonate + CTP = CMP-3-deoxy-beta-D-manno-octulosonate + diphosphate. Its pathway is nucleotide-sugar biosynthesis; CMP-3-deoxy-D-manno-octulosonate biosynthesis; CMP-3-deoxy-D-manno-octulosonate from 3-deoxy-D-manno-octulosonate and CTP: step 1/1. It functions in the pathway bacterial outer membrane biogenesis; lipopolysaccharide biosynthesis. Functionally, activates KDO (a required 8-carbon sugar) for incorporation into bacterial lipopolysaccharide in Gram-negative bacteria. The protein is 3-deoxy-manno-octulosonate cytidylyltransferase of Nitrobacter winogradskyi (strain ATCC 25391 / DSM 10237 / CIP 104748 / NCIMB 11846 / Nb-255).